The primary structure comprises 143 residues: Large ribosomal subunit protein uL15 (143 aa).

Residues 1–59 (MELNTITPGQGAKHAKRRVGRGIGSGLGKTAGRGHKGQKSRSGGYHKVGFEGGQMPMQR) form a disordered region. Residues 21-31 (RGIGSGLGKTA) are compositionally biased toward gly residues.

It belongs to the universal ribosomal protein uL15 family. Part of the 50S ribosomal subunit.

Binds to the 23S rRNA. In Polaromonas naphthalenivorans (strain CJ2), this protein is Large ribosomal subunit protein uL15.